We begin with the raw amino-acid sequence, 422 residues long: Tyrosine--tRNA ligase 1 (422 aa).

Residue Y36 coordinates L-tyrosine. A 'HIGH' region motif is present at residues 41-50; the sequence is PTAGSLHIGH. 2 residues coordinate L-tyrosine: Y173 and Q177. The 'KMSKS' region signature appears at 233-237; it reads KFGKT. K236 is a binding site for ATP. Residues 355–419 form the S4 RNA-binding domain; sequence SDVVTLLLET…GKKQFAMVKL (65 aa).

It belongs to the class-I aminoacyl-tRNA synthetase family. TyrS type 1 subfamily. In terms of assembly, homodimer.

Its subcellular location is the cytoplasm. The enzyme catalyses tRNA(Tyr) + L-tyrosine + ATP = L-tyrosyl-tRNA(Tyr) + AMP + diphosphate + H(+). In terms of biological role, catalyzes the attachment of tyrosine to tRNA(Tyr) in a two-step reaction: tyrosine is first activated by ATP to form Tyr-AMP and then transferred to the acceptor end of tRNA(Tyr). The sequence is that of Tyrosine--tRNA ligase 1 from Vibrio vulnificus (strain YJ016).